Consider the following 131-residue polypeptide: Cytochrome b5 (131 aa).

The region spanning 3 to 79 (AKIFSLDEVS…LEEYLIGSLD (77 aa)) is the Cytochrome b5 heme-binding domain. Heme-binding residues include His-38 and His-62. A helical membrane pass occupies residues 108 to 125 (IILPALAIIGALVYKYVI).

This sequence belongs to the cytochrome b5 family.

It localises to the endoplasmic reticulum membrane. Its subcellular location is the microsome membrane. Functionally, membrane bound hemoprotein which function as an electron carrier for several membrane bound oxygenases. The chain is Cytochrome b5 from Rhizopus stolonifer (Rhizopus nigricans).